A 247-amino-acid polypeptide reads, in one-letter code: Diglucosylglycerate octanoyltransferase (247 aa).

This sequence belongs to the OctT acyltransferase family. As to quaternary structure, homotetramer.

The catalysed reaction is (2R)-2-O-[alpha-D-glucopyranosyl-(1-&gt;6)-alpha-D-glucopyranosyl]-glycerate + octanoyl-CoA = (2R)-2-O-[6-O-octanoyl-alpha-D-glucopyranosyl-(1-&gt;6)-alpha-D-glucopyranosyl]-glycerate + CoA. Functionally, sugar octanoyltransferase likely involved in the biosynthesis of mycobacterial methylglucose lipopolysaccharide (MGLP). Catalyzes the transfer of an octanoyl group from octanoyl-CoA to the C6 OH of the second glucose in diglucosylglycerate (DGG). DGG is the preferred acceptor, but to a lesser extent, GG (glucosylglycerate) can also be used as substrate. DGG and GG are the two earliest intermediates in MGLP biosynthesis. The chain is Diglucosylglycerate octanoyltransferase from Mycobacterium tuberculosis (strain ATCC 25618 / H37Rv).